The primary structure comprises 757 residues: Neutral ceramidase 2 (757 aa).

The N-terminal stretch at 1–25 is a signal peptide; sequence MAVSLPLFQFILFLLLLLLSRTVYA. An N-linked (GlcNAc...) asparagine glycan is attached at Asn-311. The Nucleophile role is filled by Ser-330. Asn-348 and Asn-657 each carry an N-linked (GlcNAc...) asparagine glycan.

Belongs to the neutral ceramidase family.

Its subcellular location is the secreted. It localises to the endoplasmic reticulum. The protein resides in the golgi apparatus. It carries out the reaction an N-acylsphing-4-enine + H2O = sphing-4-enine + a fatty acid. Hydrolyzes the sphingolipid ceramide into sphingosine and free fatty acid. The protein is Neutral ceramidase 2 of Arabidopsis thaliana (Mouse-ear cress).